Consider the following 1083-residue polypeptide: DNA-directed RNA polymerase subunit beta (1083 aa).

The protein belongs to the RNA polymerase beta chain family. In plastids the minimal PEP RNA polymerase catalytic core is composed of four subunits: alpha, beta, beta', and beta''. When a (nuclear-encoded) sigma factor is associated with the core the holoenzyme is formed, which can initiate transcription.

Its subcellular location is the plastid. The protein localises to the chloroplast. The enzyme catalyses RNA(n) + a ribonucleoside 5'-triphosphate = RNA(n+1) + diphosphate. Functionally, DNA-dependent RNA polymerase catalyzes the transcription of DNA into RNA using the four ribonucleoside triphosphates as substrates. In Acorus calamus var. americanus (American sweet flag), this protein is DNA-directed RNA polymerase subunit beta.